The sequence spans 338 residues: Glycerol-3-phosphate dehydrogenase [NAD(P)+] (338 aa).

Residues tryptophan 11, arginine 30, and lysine 109 each contribute to the NADPH site. 3 residues coordinate sn-glycerol 3-phosphate: lysine 109, glycine 143, and serine 145. Alanine 147 is an NADPH binding site. Sn-glycerol 3-phosphate contacts are provided by lysine 198, aspartate 251, serine 261, arginine 262, and asparagine 263. Lysine 198 serves as the catalytic Proton acceptor. Position 262 (arginine 262) interacts with NADPH. The NADPH site is built by valine 286 and glutamate 288.

It belongs to the NAD-dependent glycerol-3-phosphate dehydrogenase family.

It localises to the cytoplasm. It carries out the reaction sn-glycerol 3-phosphate + NAD(+) = dihydroxyacetone phosphate + NADH + H(+). The catalysed reaction is sn-glycerol 3-phosphate + NADP(+) = dihydroxyacetone phosphate + NADPH + H(+). The protein operates within membrane lipid metabolism; glycerophospholipid metabolism. In terms of biological role, catalyzes the reduction of the glycolytic intermediate dihydroxyacetone phosphate (DHAP) to sn-glycerol 3-phosphate (G3P), the key precursor for phospholipid synthesis. The polypeptide is Glycerol-3-phosphate dehydrogenase [NAD(P)+] (Cupriavidus taiwanensis (strain DSM 17343 / BCRC 17206 / CCUG 44338 / CIP 107171 / LMG 19424 / R1) (Ralstonia taiwanensis (strain LMG 19424))).